Reading from the N-terminus, the 574-residue chain is ATP synthase subunit beta, mitochondrial (574 aa).

A mitochondrion-targeting transit peptide spans 1–26 (MLSSVRLAALRAGKTNSVFQAVRAFA). Position 183–190 (183–190 (GGAGVGKT)) interacts with ATP.

This sequence belongs to the ATPase alpha/beta chains family. As to quaternary structure, F-type ATPases have 2 components, CF(1) - the catalytic core - and CF(0) - the membrane proton channel. CF(1) has five subunits: alpha(3), beta(3), gamma(1), delta(1), epsilon(1). CF(0) has three main subunits: a, b and c.

It localises to the mitochondrion. The protein localises to the mitochondrion inner membrane. The enzyme catalyses ATP + H2O + 4 H(+)(in) = ADP + phosphate + 5 H(+)(out). Its function is as follows. Mitochondrial membrane ATP synthase (F(1)F(0) ATP synthase or Complex V) produces ATP from ADP in the presence of a proton gradient across the membrane which is generated by electron transport complexes of the respiratory chain. F-type ATPases consist of two structural domains, F(1) - containing the extramembraneous catalytic core, and F(0) - containing the membrane proton channel, linked together by a central stalk and a peripheral stalk. During catalysis, ATP synthesis in the catalytic domain of F(1) is coupled via a rotary mechanism of the central stalk subunits to proton translocation. Subunits alpha and beta form the catalytic core in F(1). Rotation of the central stalk against the surrounding alpha(3)beta(3) subunits leads to hydrolysis of ATP in three separate catalytic sites on the beta subunits. The chain is ATP synthase subunit beta, mitochondrial (ATP2) from Chlamydomonas reinhardtii (Chlamydomonas smithii).